Consider the following 58-residue polypeptide: T-cell receptor gamma alternate reading frame protein (58 aa).

As to expression, detected at low levels in the ductal cells of the salivary gland but not in the acinar cells (at protein level). Expressed in endometrium (at protein level). Expressed in epithelial cells within the acinar ducts of the prostate.

This is T-cell receptor gamma alternate reading frame protein from Homo sapiens (Human).